The sequence spans 200 residues: Large ribosomal subunit protein uL4c (200 aa).

A disordered region spans residues 45–71 (RAEIRGGGRKPWKQKGTGRARAGSRRS). Basic residues predominate over residues 51–68 (GGRKPWKQKGTGRARAGS).

It belongs to the universal ribosomal protein uL4 family. Part of the 50S ribosomal subunit.

It localises to the plastid. The protein resides in the chloroplast. Its function is as follows. Probably binds the 23S rRNA. This chain is Large ribosomal subunit protein uL4c (rpl4), found in Cyanidioschyzon merolae (strain NIES-3377 / 10D) (Unicellular red alga).